Here is a 352-residue protein sequence, read N- to C-terminus: Biotin synthase (352 aa).

Residues 44 to 262 (NRVQVSTLLS…LAVARILMPK (219 aa)) form the Radical SAM core domain. [4Fe-4S] cluster contacts are provided by Cys-59, Cys-63, and Cys-66. The [2Fe-2S] cluster site is built by Cys-103, Cys-134, Cys-194, and Arg-266.

Belongs to the radical SAM superfamily. Biotin synthase family. As to quaternary structure, homodimer. It depends on [4Fe-4S] cluster as a cofactor. The cofactor is [2Fe-2S] cluster.

The catalysed reaction is (4R,5S)-dethiobiotin + (sulfur carrier)-SH + 2 reduced [2Fe-2S]-[ferredoxin] + 2 S-adenosyl-L-methionine = (sulfur carrier)-H + biotin + 2 5'-deoxyadenosine + 2 L-methionine + 2 oxidized [2Fe-2S]-[ferredoxin]. It participates in cofactor biosynthesis; biotin biosynthesis; biotin from 7,8-diaminononanoate: step 2/2. Its function is as follows. Catalyzes the conversion of dethiobiotin (DTB) to biotin by the insertion of a sulfur atom into dethiobiotin via a radical-based mechanism. This Pseudomonas putida (strain GB-1) protein is Biotin synthase.